Here is a 122-residue protein sequence, read N- to C-terminus: Large ribosomal subunit protein uL14c (122 aa).

The protein belongs to the universal ribosomal protein uL14 family. In terms of assembly, part of the 50S ribosomal subunit.

It is found in the plastid. The protein resides in the chloroplast. In terms of biological role, binds to 23S rRNA. In Dioscorea elephantipes (Elephant's foot yam), this protein is Large ribosomal subunit protein uL14c.